A 133-amino-acid chain; its full sequence is Ribosomal RNA large subunit methyltransferase H 1 (133 aa).

Residues isoleucine 55, glycine 89, and 101 to 106 (ISPMEM) contribute to the S-adenosyl-L-methionine site.

Belongs to the RNA methyltransferase RlmH family. Homodimer.

The protein localises to the cytoplasm. It carries out the reaction pseudouridine(1915) in 23S rRNA + S-adenosyl-L-methionine = N(3)-methylpseudouridine(1915) in 23S rRNA + S-adenosyl-L-homocysteine + H(+). Specifically methylates the pseudouridine at position 1915 (m3Psi1915) in 23S rRNA. This chain is Ribosomal RNA large subunit methyltransferase H 1, found in Thermoanaerobacter sp. (strain X514).